The following is a 428-amino-acid chain: Something about silencing protein 10 (428 aa).

The segment at 1–93 is disordered; that stretch reads MDSDGDDYVM…NTMDWGSKRS (93 aa). 2 stretches are compositionally biased toward acidic residues: residues 15–24 and 46–62; these read QEYDDEEREI and SDDD…EQQD. Phosphoserine occurs at positions 152, 323, 324, and 337. Residues 317-386 are disordered; that stretch reads GQQASVSSDD…LRNPRVKHRG (70 aa). The span at 324–336 shows a compositional bias: acidic residues; the sequence is SDDDDNDDDDDAE. Positions 344-353 are enriched in acidic residues; that stretch reads EEAGEEEEEE. A compositionally biased stretch (basic residues) spans 370–386; that stretch reads TPHRKKELRNPRVKHRG.

It belongs to the SAS10 family.

It localises to the nucleus. Functionally, essential for gene silencing: has a role in the structure of silenced chromatin. May be involved in gene regulation during development. Binds RNA. This chain is Something about silencing protein 10, found in Drosophila melanogaster (Fruit fly).